A 456-amino-acid polypeptide reads, in one-letter code: FAD-dependent monooxygenase sor5 (456 aa).

A helical transmembrane segment spans residues 18–38 (PLEVAIVGGGLTGLALALGLL). N-linked (GlcNAc...) asparagine glycosylation occurs at asparagine 43. FAD is bound by residues glutamate 48 and arginine 119. Arginine 200 is an active-site residue. Residues aspartate 331 and alanine 344 each coordinate FAD.

It belongs to the paxM FAD-dependent monooxygenase family. The cofactor is FAD.

It localises to the membrane. It participates in secondary metabolite biosynthesis. Its function is as follows. FAD-dependent monooxygenase; part of the SOR gene cluster that mediates the biosynthesis of sorbicillinoids, a diverse group of yellow secondary metabolites that restrict growth of competing pathogenic fungi but not of bacteria. Sorbicillinoids biosynthesis requires the action of two PKSs. The SOR cluster is required for the production of trichodimerol and dihydrotrichotetronin, with sor2 being sufficient for production of trichodimerol, but not dihydrotrichotetronin in the light. Sor1 iteratively combines three acetyl units and the growing chain is modified by the ketoacyl reductase subunit, and optional by the enoyl reductase subunit in the second cycle. The polyketide is then handed over to the PKS sor2, which adds three more acetyl units, and two methyl groups. Sor2 releases an aldehyde, which undergoes spontaneous cyclization resulting in the formation of sorbicillin or 2',3'-dihydrosorbicillin. The monooxygenase sor5 oxidizes sorbicillin and 2',3'-dihydrosorbicillin to 2',3'-dihydrosorbicillinol and sorbicillinol, respectively. The oxidoreductase sor8 further converts sorbicillinol into oxosorbicillinol. Sorbicillinol is the building block for the other sorbicillinoids such as disorbicillinol, bisvertinolon, dihydrobisvertinolone, and dihydrotrichotetronine. The sequence is that of FAD-dependent monooxygenase sor5 from Hypocrea jecorina (strain QM6a) (Trichoderma reesei).